A 341-amino-acid chain; its full sequence is Putative UPF0607 protein ENSP00000383144 (341 aa).

2 disordered regions span residues 70–131 (RLPK…NPRP) and 218–279 (LMVG…PPAK). Over residues 72-101 (PKTEVRAEEPKEATEVKDQVETQEQEDNKR) the composition is skewed to basic and acidic residues. A compositionally biased stretch (polar residues) spans 108-127 (EAASTSRPLETQGNLTSSWY). Residues 243–252 (AGHRSHKRKL) are compositionally biased toward basic residues.

This sequence belongs to the UPF0607 family.

The protein is Putative UPF0607 protein ENSP00000383144 of Homo sapiens (Human).